Consider the following 213-residue polypeptide: Thymidylate kinase (213 aa).

Position 10-17 (10-17) interacts with ATP; the sequence is GLEGAGKT.

Belongs to the thymidylate kinase family.

The enzyme catalyses dTMP + ATP = dTDP + ADP. In terms of biological role, phosphorylation of dTMP to form dTDP in both de novo and salvage pathways of dTTP synthesis. This chain is Thymidylate kinase, found in Escherichia coli O157:H7 (strain EC4115 / EHEC).